A 310-amino-acid chain; its full sequence is MPVSTTLLQSDLPGLPLRHRGKVRDVFDIPRDRLPADAPPGDYLLMVATDRLSAFDVVLPDPIPGKGEMLCQVSNFWFHKTEHLMPNHLVDIRVEQVLPEGVDPALYAKRAVVTRKLKPVPVEAIARGYLIGSGWKDYQRTGKISGIELPDGLRQAEKLPEPIFTPSTKAAVGDHDENIDFDAMVKTVGAELAERVRDATLRIYRFAADFAAECGILLADTKFEFGTDADGRLYVMDEMLTPDSSRYWPADQYELGTSPPSYDKQFVRDYLETLDWGKTAPGPSLPADVIDRTRAKYAEALQRLAGISVD.

It belongs to the SAICAR synthetase family.

The catalysed reaction is 5-amino-1-(5-phospho-D-ribosyl)imidazole-4-carboxylate + L-aspartate + ATP = (2S)-2-[5-amino-1-(5-phospho-beta-D-ribosyl)imidazole-4-carboxamido]succinate + ADP + phosphate + 2 H(+). It functions in the pathway purine metabolism; IMP biosynthesis via de novo pathway; 5-amino-1-(5-phospho-D-ribosyl)imidazole-4-carboxamide from 5-amino-1-(5-phospho-D-ribosyl)imidazole-4-carboxylate: step 1/2. The sequence is that of Phosphoribosylaminoimidazole-succinocarboxamide synthase from Xanthomonas oryzae pv. oryzae (strain MAFF 311018).